A 262-amino-acid chain; its full sequence is Shikimate dehydrogenase (NADP(+)) (262 aa).

Shikimate is bound by residues 15–17 and threonine 62; that span reads SRS. Lysine 66 (proton acceptor) is an active-site residue. Glutamate 78 is an NADP(+) binding site. Residues asparagine 87 and aspartate 102 each coordinate shikimate. NADP(+)-binding positions include 126–130, 150–155, and methionine 214; these read GAGGA and NRTLAR. Position 216 (tyrosine 216) interacts with shikimate. Glycine 236 contacts NADP(+).

The protein belongs to the shikimate dehydrogenase family. Homodimer.

The catalysed reaction is shikimate + NADP(+) = 3-dehydroshikimate + NADPH + H(+). The protein operates within metabolic intermediate biosynthesis; chorismate biosynthesis; chorismate from D-erythrose 4-phosphate and phosphoenolpyruvate: step 4/7. In terms of biological role, involved in the biosynthesis of the chorismate, which leads to the biosynthesis of aromatic amino acids. Catalyzes the reversible NADPH linked reduction of 3-dehydroshikimate (DHSA) to yield shikimate (SA). This chain is Shikimate dehydrogenase (NADP(+)), found in Acinetobacter baumannii (strain ACICU).